We begin with the raw amino-acid sequence, 342 residues long: Nucleoid-associated protein Spea_1765 (342 aa).

It belongs to the YejK family.

Its subcellular location is the cytoplasm. The protein resides in the nucleoid. The polypeptide is Nucleoid-associated protein Spea_1765 (Shewanella pealeana (strain ATCC 700345 / ANG-SQ1)).